The chain runs to 476 residues: Lactate utilization protein B 1 (476 aa).

4Fe-4S ferredoxin-type domains are found at residues 301-331 (GTEF…GHAY) and 350-379 (YDEY…LHDL). The [4Fe-4S] cluster site is built by Cys310, Cys313, Cys316, Cys320, Cys363, Cys366, and Cys370.

This sequence belongs to the LutB/YkgF family.

In terms of biological role, is involved in L-lactate degradation and allows cells to grow with lactate as the sole carbon source. Has probably a role as an electron transporter during oxidation of L-lactate. In Bacillus mycoides (strain KBAB4) (Bacillus weihenstephanensis), this protein is Lactate utilization protein B 1.